The primary structure comprises 87 residues: U18-myrmicitoxin-Mri1a (87 aa).

The signal sequence occupies residues Met-1–Pro-32. Residues Asn-33 to Gln-77 enclose the EGF-like domain. Disulfide bonds link Cys-37–Cys-52, Cys-46–Cys-65, and Cys-67–Cys-76.

In terms of processing, O-glycosylated. In terms of tissue distribution, expressed by the venom gland.

It is found in the secreted. This Manica rubida (European giant red ant) protein is U18-myrmicitoxin-Mri1a.